A 164-amino-acid chain; its full sequence is Mineralocorticoid receptor (164 aa).

The NR LBD domain maps to 1–162 (QYSWMCLSSF…EFPRCWWRSS (162 aa)). Residues R15 and T143 each coordinate 21-hydroxyprogesterone. Aldosterone contacts are provided by R15 and T143. The progesterone site is built by R15 and T143.

Belongs to the nuclear hormone receptor family. NR3 subfamily. As to quaternary structure, heteromultimeric cytoplasmic complex with HSP90, HSP70, and FKBP4, in the absence of ligand. After ligand binding, it translocates to the nucleus and binds to DNA as a homodimer and as a heterodimer with NR3C1. Binds the coactivator NCOA2. May interact with HSD11B2 in the absence of ligand. Binds the coactivators NCOA1, TIF1 and NRIP1. Post-translationally, phosphorylated.

The protein localises to the cytoplasm. Its subcellular location is the nucleus. It is found in the endoplasmic reticulum membrane. In terms of biological role, receptor for both mineralocorticoids (MC) such as aldosterone and glucocorticoids (GC) such as corticosterone or cortisol. Binds to mineralocorticoid response elements (MRE) and transactivates target genes. The effect of MC is to increase ion and water transport and thus raise extracellular fluid volume and blood pressure and lower potassium levels. This is Mineralocorticoid receptor (NR3C2) from Sus scrofa (Pig).